An 834-amino-acid polypeptide reads, in one-letter code: MGSLDYSSKNNSSLGSISSDDESIVLDNENNGAPKAQPRTTLLQLKKSLEADYKKNLYKNADGQDHLLLQNTFRKILNYGTITLDAVKKELTTYIQDSENEPYSAVVRSLLVKVVESKTIPVDRLVDFMTAFNGQSLPIDIFYKKYFGPDALKPTVWDVFGSSLSDLSSSDSDSSSTTTTTSDTSIWSDSSSASAQRNRSPTRSTRSSRSSRSSIRSSSSTSSRSSRSSSSSSSSSNSSSDTTSSSSSSSSSSEDDDESKAPAMVQSPTNNKIREFTPQERQRIELVKERAENKKIVPREAKVVQVQPGGKPGGVDVNFATRQSSGGPSPVKRTFSDPVSSTSQKDCEFLYKKLPWVKDIINHVYVYPVRGNFEGIIEYDKFIEHDGRKWYHPKEQYYTLQCMGTKSQRGKTLTITRDGKTWKLMVAIDTGTRGIVVQNEDMLTAELDYIRTWKTSKNDHIRDFMENVPTADMVQLAKIVLVNALQDSLGATVPLVYKSTTSPFIETVVDTIFKNSKNGESFVRILSNLVVFLTINLSFISSSVFAKRLRRQIYLPETLPFLTDADKLPEVFVVKNIPENTKKFVVEKLEEERTSFTRQFYDNLRIDSSLIRKPTKPILWNKPTTQVELPDIKTVCKNRNDVQDEQDEDVVYYTDMNEIYCFNVYKLWSLFRQTDTPINPYTSRPFTDQFIQIFLTRYASKPLVRKIENLTKTTATSRLEELIERELSLIENNLIEAENPTFIQKYKTTITQTPSDDYLPVQGKRRISRVTPSPPGGATKVRENFHPPGSAAGNTCMECRTPIEPSSDGIMSVFRNKMVRFCSYDCLERNKAFK.

3 disordered regions span residues 1–38 (MGSL…KAQP), 166–280 (DLSS…TPQE), and 767–787 (ISRV…NFHP). 2 stretches are compositionally biased toward low complexity: residues 7-18 (SSKNNSSLGSIS) and 166-252 (DLSS…SSSS).

Belongs to the IIV-6 268L family.

This is an uncharacterized protein from Invertebrate iridescent virus 3 (IIV-3).